A 346-amino-acid chain; its full sequence is Coproporphyrin III ferrochelatase (346 aa).

Ser52 and Tyr121 together coordinate Fe-coproporphyrin III. Residues His181 and Glu264 each contribute to the Fe(2+) site.

The protein belongs to the ferrochelatase family.

Its subcellular location is the cytoplasm. The enzyme catalyses Fe-coproporphyrin III + 2 H(+) = coproporphyrin III + Fe(2+). It functions in the pathway porphyrin-containing compound metabolism; protoheme biosynthesis. Its function is as follows. Involved in coproporphyrin-dependent heme b biosynthesis. Catalyzes the insertion of ferrous iron into coproporphyrin III to form Fe-coproporphyrin III. This chain is Coproporphyrin III ferrochelatase, found in Mycobacterium sp. (strain JLS).